Here is a 60-residue protein sequence, read N- to C-terminus: Protein CADMIUM TOLERANCE 4 (60 aa).

Residues 26–42 form a helical membrane-spanning segment; it reads GFLYACLFMLCCCFCCY.

This sequence belongs to the CYSTM1 family. As to expression, mainly expressed in shoots, and, to a lower extent, in roots.

Its subcellular location is the cell membrane. The protein localises to the secreted. The protein resides in the cell wall. Functionally, confers resistance to heavy metal ions (e.g. aluminium (Al)) by chelating them at the plasma membrane of root cells, thus stopping their entry and reducing their accumulation. The polypeptide is Protein CADMIUM TOLERANCE 4 (Oryza sativa subsp. japonica (Rice)).